We begin with the raw amino-acid sequence, 218 residues long: Ribose-5-phosphate isomerase A (218 aa).

Substrate is bound by residues 28-31, 81-84, and 94-97; these read TGST, DSAD, and KGGG. The active-site Proton acceptor is E103. K121 provides a ligand contact to substrate.

It belongs to the ribose 5-phosphate isomerase family. Homodimer.

The enzyme catalyses aldehydo-D-ribose 5-phosphate = D-ribulose 5-phosphate. It participates in carbohydrate degradation; pentose phosphate pathway; D-ribose 5-phosphate from D-ribulose 5-phosphate (non-oxidative stage): step 1/1. Its function is as follows. Catalyzes the reversible conversion of ribose-5-phosphate to ribulose 5-phosphate. The protein is Ribose-5-phosphate isomerase A of Buchnera aphidicola subsp. Baizongia pistaciae (strain Bp).